A 146-amino-acid polypeptide reads, in one-letter code: Ribonuclease H (146 aa).

The region spanning 1 to 143 (MQKKVTIYTD…CDYLATQAIK (143 aa)) is the RNase H type-1 domain. Residues D10, E48, D70, and D135 each coordinate Mg(2+).

The protein belongs to the RNase H family. As to quaternary structure, monomer. Mg(2+) serves as cofactor.

It is found in the cytoplasm. It catalyses the reaction Endonucleolytic cleavage to 5'-phosphomonoester.. Endonuclease that specifically degrades the RNA of RNA-DNA hybrids. The polypeptide is Ribonuclease H (Chlorobium phaeobacteroides (strain BS1)).